Consider the following 277-residue polypeptide: Acetyl-coenzyme A carboxylase carboxyl transferase subunit beta (277 aa).

The 253-residue stretch at 25–277 (LVRRCPVCHT…DLLRLHKGES (253 aa)) folds into the CoA carboxyltransferase N-terminal domain. Residues cysteine 29, cysteine 32, cysteine 47, and cysteine 50 each contribute to the Zn(2+) site. A C4-type zinc finger spans residues 29–50 (CPVCHTTFLTDHWEPTRLCPAC).

It belongs to the AccD/PCCB family. In terms of assembly, acetyl-CoA carboxylase is a heterohexamer composed of biotin carboxyl carrier protein (AccB), biotin carboxylase (AccC) and two subunits each of ACCase subunit alpha (AccA) and ACCase subunit beta (AccD). The cofactor is Zn(2+).

The protein resides in the cytoplasm. The catalysed reaction is N(6)-carboxybiotinyl-L-lysyl-[protein] + acetyl-CoA = N(6)-biotinyl-L-lysyl-[protein] + malonyl-CoA. Its pathway is lipid metabolism; malonyl-CoA biosynthesis; malonyl-CoA from acetyl-CoA: step 1/1. Component of the acetyl coenzyme A carboxylase (ACC) complex. Biotin carboxylase (BC) catalyzes the carboxylation of biotin on its carrier protein (BCCP) and then the CO(2) group is transferred by the transcarboxylase to acetyl-CoA to form malonyl-CoA. This Levilactobacillus brevis (strain ATCC 367 / BCRC 12310 / CIP 105137 / JCM 1170 / LMG 11437 / NCIMB 947 / NCTC 947) (Lactobacillus brevis) protein is Acetyl-coenzyme A carboxylase carboxyl transferase subunit beta.